Here is a 42-residue protein sequence, read N- to C-terminus: Envelope protein P10 (42 aa).

Residues Thr20–Leu40 traverse the membrane as a helical segment.

It is found in the virion membrane. Involved in cell lysis. This Pseudomonas savastanoi pv. phaseolicola (Pseudomonas syringae pv. phaseolicola) protein is Envelope protein P10 (P10).